We begin with the raw amino-acid sequence, 304 residues long: Cell surface-binding protein OPG105 (304 aa).

This sequence belongs to the alpha-carbonic anhydrase family. In terms of assembly, homodimer; disulfide-linked. Post-translationally, apparently non-glycosylated.

The protein localises to the virion membrane. Functionally, binds to chondroitin sulfate on the cell surface to provide virion attachment to target cell. In Monkeypox virus, this protein is Cell surface-binding protein OPG105 (OPG105).